Here is a 373-residue protein sequence, read N- to C-terminus: SAM domain-containing protein SAMSN-1 (373 aa).

Residues 1-72 (MLKRKPSNVS…GGGLGKKMRA (72 aa)) are disordered. Residues 20–25 (RSSSFG) carry the Important for interaction with 14-3-3 proteins motif. 2 positions are modified to phosphoserine: S23 and S34. Positions 37–48 (KPDDSTEAHEGD) are enriched in basic and acidic residues. Polar residues predominate over residues 50-61 (TNGSGEQSKTSN). S74 carries the phosphoserine modification. T76 carries the post-translational modification Phosphothreonine. Residues S90 and S119 each carry the phosphoserine modification. A disordered region spans residues 91–153 (EEKDEEDGEN…DGTSNRDSFR (63 aa)). Positions 123–146 (SDSMDSLYSGQSSSSGITSCSDGT) are enriched in low complexity. Y160 bears the Phosphotyrosine mark. One can recognise an SH3 domain in the interval 163–224 (PFCGRARVHT…KFIYVDVISE (62 aa)). Residues 241 to 305 (KKSKTLQEFL…LSAAENFLEE (65 aa)) form the SAM domain. The interval 337-359 (DSGCYISSGNSDNGKEDLESENL) is disordered.

Interacts with FASLG. Interacts with phosphotyrosine containing proteins. Interacts (via SH3 domain) with CTTN. Interacts (phosphorylated at Ser-23) with YWHAB, YWHAE, YWHAG, YWHAH, YWHAZ and SFN. Interacts directly with SAP30 and HDAC1. Identified in a complex with SAP30 and HDAC1. As to expression, detected in peripheral blood B-cells (at protein level). Detected in spleen, liver and peripheral blood.

The protein localises to the nucleus. The protein resides in the cytoplasm. It localises to the cell projection. Its subcellular location is the ruffle. In terms of biological role, negative regulator of B-cell activation. Down-regulates cell proliferation (in vitro). Promotes RAC1-dependent membrane ruffle formation and reorganization of the actin cytoskeleton. Regulates cell spreading and cell polarization. Stimulates HDAC1 activity. Regulates LYN activity by modulating its tyrosine phosphorylation. In Homo sapiens (Human), this protein is SAM domain-containing protein SAMSN-1 (SAMSN1).